The sequence spans 925 residues: Probable disease resistance protein At1g61310 (925 aa).

Positions 25-69 (GKSYIRTLEKNLRALQREMEDLRATQHEVQNKVAREESRHQQRLE) form a coiled coil. The interval 134 to 154 (NFDEVSQPPPRSEVEERPTQP) is disordered. The 304-residue stretch at 139 to 442 (SQPPPRSEVE…CEGFIGEDQV (304 aa)) folds into the NB-ARC domain. 181 to 188 (GMGGVGKT) lines the ATP pocket. LRR repeat units follow at residues 525 to 546 (AVRRMSLMRNEIEEITCESKCS), 547 to 568 (ELTTLFLQSNQLKNLSGEFIRY), 571 to 594 (KLVVLDLSDNRDFNELPEQISGLV), 595 to 617 (SLQYLDLSFTRIEQLPVGLKELK), 618 to 640 (KLTFLDLAYTARLCSISGISRLL), and 641 to 663 (SLRVLSLLGSKVHGDASVLKELQ).

It belongs to the disease resistance NB-LRR family.

Functionally, probable disease resistance protein. This chain is Probable disease resistance protein At1g61310, found in Arabidopsis thaliana (Mouse-ear cress).